Consider the following 373-residue polypeptide: Galactoside alpha-(1,2)-fucosyltransferase 1 (373 aa).

Topologically, residues 1–12 (MWPPSRRQLCLA) are cytoplasmic. The helical; Signal-anchor for type II membrane protein transmembrane segment at 13-29 (FLLVCALSAFSFLLHLH) threads the bilayer. At 30 to 373 (QDLFRNGLAL…GSWRPWRFLG (344 aa)) the chain is on the lumenal side. N-linked (GlcNAc...) asparagine glycans are attached at residues asparagine 66, asparagine 301, and asparagine 327.

Belongs to the glycosyltransferase 11 family. Brain.

It localises to the golgi apparatus. The protein localises to the golgi stack membrane. It catalyses the reaction a beta-D-galactosyl-(1-&gt;4)-N-acetyl-beta-D-glucosaminyl derivative + GDP-beta-L-fucose = an alpha-L-Fuc-(1-&gt;2)-beta-D-Gal-(1-&gt;4)-beta-D-GlcNAc derivative + GDP + H(+). It carries out the reaction a ganglioside GA1 + GDP-beta-L-fucose = a ganglioside Fuc-GA1 + GDP + H(+). The catalysed reaction is a beta-D-Gal-(1-&gt;3)-beta-D-GlcNAc-(1-&gt;3)-beta-D-Gal-(1-&gt;4)-beta-D-Glc-(1&lt;-&gt;1')-Cer(d18:1(4E)) + GDP-beta-L-fucose = alpha-L-fucosyl-(1-&gt;2)- beta-D-galactosyl-(1-&gt;3)-N-acetyl-beta-D-glucosaminyl-(1-&gt;3)-beta-D-galactosyl-(1-&gt;4)-beta-D-glucosyl-(1&lt;-&gt;1')-N-acylsphing-4-enine + GDP + H(+). The enzyme catalyses a neolactoside nLc4Cer(d18:1(4E)) + GDP-beta-L-fucose = a neolactoside IV(2)-alpha-Fuc-nLc4Cer(d18:1(4E)) + GDP + H(+). It catalyses the reaction a ganglioside GM1 + GDP-beta-L-fucose = a ganglioside Fuc-GM1 + GDP + H(+). It carries out the reaction beta-D-galactosyl-(1-&gt;3)-N-acetyl-D-galactosamine + GDP-beta-L-fucose = alpha-L-fucosyl-(1-&gt;2)-beta-D-galactosyl-(1-&gt;3)-N-acetyl-D-galactosamine + GDP + H(+). The protein operates within protein modification; protein glycosylation. In terms of biological role, catalyzes the transfer of L-fucose, from a guanosine diphosphate-beta-L-fucose, to the terminal galactose residue of glycoconjugates through an alpha(1,2) linkage leading to H antigen synthesis that is an intermediate substrate in the synthesis of ABO blood group antigens. H antigen is essential for maturation of the glomerular layer of the main olfactory bulb, in cell migration and early cell-cell contacts during tumor associated angiogenesis. Preferentially fucosylates soluble lactose and to a lesser extent fucosylates glycolipids gangliosides GA1 and GM1a. This is Galactoside alpha-(1,2)-fucosyltransferase 1 from Oryctolagus cuniculus (Rabbit).